Here is a 140-residue protein sequence, read N- to C-terminus: UPF0132 membrane protein MJ1527 (140 aa).

The next 3 membrane-spanning stretches (helical) occupy residues 40–60 (MEGV…LLLE), 70–90 (AMQS…VSAI), and 92–112 (IIGW…WIVG).

This sequence belongs to the UPF0132 family.

It localises to the cell membrane. This is UPF0132 membrane protein MJ1527 from Methanocaldococcus jannaschii (strain ATCC 43067 / DSM 2661 / JAL-1 / JCM 10045 / NBRC 100440) (Methanococcus jannaschii).